The chain runs to 198 residues: uncharacterized protein (198 aa).

Residues 40–111 (GSALPPQAPT…LSRGAGQGAP (72 aa)) form a disordered region. The segment covering 60–74 (SSRTPGPRPPRSTLR) has biased composition (low complexity).

This is an uncharacterized protein from Homo sapiens (Human).